We begin with the raw amino-acid sequence, 760 residues long: General transcription and DNA repair factor IIH helicase subunit XPD (760 aa).

Residues 7–283 (GLLVYFPYDY…KETDEQRLRD (277 aa)) form the Helicase ATP-binding domain. 42–49 (MPSGTGKT) serves as a coordination point for ATP. [4Fe-4S] cluster-binding residues include C116, C134, C155, and C190. Positions 234 to 237 (DEAH) match the DEAH box motif. The interval 438-637 (MDASLAIKPV…TQSRILKARL (200 aa)) is mediates interaction with MMS19. Residues 682–695 (KRFARGDKRGKLPR) carry the Nuclear localization signal motif.

This sequence belongs to the helicase family. RAD3/XPD subfamily. Component of the 7-subunit TFIIH core complex composed of XPB/ERCC3, XPD/ERCC2, GTF2H1, GTF2H2, GTF2H3, GTF2H4 and GTF2H5, which is active in NER. The core complex associates with the 3-subunit CDK-activating kinase (CAK) module composed of CCNH/cyclin H, CDK7 and MNAT1 to form the 10-subunit holoenzyme (holo-TFIIH) active in transcription. Interacts with GTF2H2 (p44) which stimulates the 5'-3' helicase activity of this subunit. Component of the MMXD complex, which includes CIAO1, ERCC2, CIAO2B, MMS19 and SLC25A5. Interacts with CIAO1 and CIAO2B; the interaction WITH CIAO2B is direct. Interacts with ATF7IP. Interacts directly with MMS19. Part of TBP-based Pol II pre-initiation complex (PIC), in which Pol II core assembles with general transcription factors and other specific initiation factors including GTF2E1, GTF2E2, GTF2F1, GTF2F2, TCEA1, ERCC2, ERCC3, GTF2H2, GTF2H3, GTF2H4, GTF2H5, GTF2A1, GTF2A2, GTF2B and TBP; this large multi-subunit PIC complex mediates DNA unwinding and targets Pol II core to the transcription start site where the first phosphodiester bond forms. In terms of assembly, (Microbial infection) Interacts with Epstein-Barr virus EBNA2. Requires Mg(2+) as cofactor. [4Fe-4S] cluster is required as a cofactor. Post-translationally, ISGylated.

The protein resides in the nucleus. Its subcellular location is the cytoplasm. It is found in the cytoskeleton. It localises to the spindle. The enzyme catalyses Couples ATP hydrolysis with the unwinding of duplex DNA at the replication fork by translocating in the 5'-3' direction. This creates two antiparallel DNA single strands (ssDNA). The leading ssDNA polymer is the template for DNA polymerase III holoenzyme which synthesizes a continuous strand.. It carries out the reaction ATP + H2O = ADP + phosphate + H(+). Its activity is regulated as follows. Interaction with GTF2H2 (p44) results in stimulation of the 5'-3' helicase activity of this subunit. DNA unwinding by this subunit in TFIIH is stimulated 4-fold by XPA and 20-fold by ERCC5/XPG. ATP-dependent 5'-3' DNA helicase. Component of the general transcription and DNA repair factor IIH (TFIIH) core complex, not absolutely essential for minimal transcription in vitro. Required for transcription-coupled nucleotide excision repair (NER) of damaged DNA; recognizes damaged bases. Sequestered in chromatin on UV-damaged DNA. When complexed to CDK-activating kinase (CAK), involved in transcription by RNA polymerase II. In NER, TFIIH acts by opening DNA around the lesion to allow the excision of the damaged oligonucleotide and its replacement by a new DNA fragment. The ATP-dependent helicase activity of XPD/ERCC2 is required for DNA opening. Involved in DNA lesion verification. In transcription, TFIIH has an essential role in transcription initiation. When the pre-initiation complex (PIC) has been established, TFIIH is required for promoter opening and promoter escape. Phosphorylation of the C-terminal tail (CTD) of the largest subunit of RNA polymerase II by the kinase module CAK controls the initiation of transcription. XPD/ERCC2 acts by forming a bridge between CAK and the core-TFIIH complex. The structure of the TFIIH transcription complex differs from the NER-TFIIH complex; large movements by XPD/ERCC2 and XPB/ERCC3 are stabilized by XPA which allow this subunit to contact ssDNA. Involved in the regulation of vitamin-D receptor activity. As part of the mitotic spindle-associated MMXD complex it plays a role in chromosome segregation. Might have a role in aging process and could play a causative role in the generation of skin cancers. This Homo sapiens (Human) protein is General transcription and DNA repair factor IIH helicase subunit XPD (ERCC2).